A 408-amino-acid polypeptide reads, in one-letter code: MTSPDERKSFWERHEFKFYRYGHVYALIYGQVVIDYVPQRALKRGVKVLLIAYGHLFSMLLIVVLPGYFCYHFRTLTDTLDRRLQLLFYVSFTNTAIKYATVIVTYVANTVHFEAINQRCTMQRTHLEFEFKNAPQEPKRPFEFFMYFKFCLINLMMMIQVCGIFAQYGEVGKGSVSQVRVHFAIYAFVLWNYTENMADYCYFINGSVLKYYRQFNLQLGSLRDEMDGLRPGGMLLHHCCELSDRLEELRRRCREIHDLQRESFRMHQFQLIGLMLSTLINNLTNFYTLFHMLAKQSLEEVSYPVVVGSVYATGFYIDTYIVALINEHIKLELEAVALTMRRFAEPREMDERLTREIEHLSLELLNYQPPMLCGLLHLDRRLVYLIAVTAFSYFITLVQFDLYLRKKS.

Topologically, residues 1–20 (MTSPDERKSFWERHEFKFYR) are cytoplasmic. The helical transmembrane segment at 21-38 (YGHVYALIYGQVVIDYVP) threads the bilayer. Residues 39–48 (QRALKRGVKV) are Extracellular-facing. The chain crosses the membrane as a helical span at residues 49–69 (LLIAYGHLFSMLLIVVLPGYF). At 70-86 (CYHFRTLTDTLDRRLQL) the chain is on the cytoplasmic side. A helical transmembrane segment spans residues 87–107 (LFYVSFTNTAIKYATVIVTYV). Over 108 to 144 (ANTVHFEAINQRCTMQRTHLEFEFKNAPQEPKRPFEF) the chain is Extracellular. The chain crosses the membrane as a helical span at residues 145 to 165 (FMYFKFCLINLMMMIQVCGIF). The Cytoplasmic portion of the chain corresponds to 166-270 (AQYGEVGKGS…RESFRMHQFQ (105 aa)). Residues 271–291 (LIGLMLSTLINNLTNFYTLFH) traverse the membrane as a helical segment. The Extracellular portion of the chain corresponds to 292-304 (MLAKQSLEEVSYP). Residues 305–325 (VVVGSVYATGFYIDTYIVALI) traverse the membrane as a helical segment. Topologically, residues 326–381 (NEHIKLELEAVALTMRRFAEPREMDERLTREIEHLSLELLNYQPPMLCGLLHLDRR) are cytoplasmic. A helical membrane pass occupies residues 382 to 402 (LVYLIAVTAFSYFITLVQFDL). Residues 403–408 (YLRKKS) lie on the Extracellular side of the membrane.

The protein belongs to the insect chemoreceptor superfamily. Gustatory receptor (GR) family. Gr10a subfamily. In terms of tissue distribution, expressed in the medial aspect of the third antennal segment, and in neurons of the terminal external chemosensory organ of larvae.

It localises to the cell membrane. Functionally, probable gustatory receptor which mediates acceptance or avoidance behavior, depending on its substrates. This is Gustatory receptor 10a (Gr10a) from Drosophila melanogaster (Fruit fly).